The chain runs to 1402 residues: DNA-directed RNA polymerase subunit beta' (1402 aa).

Positions 71, 73, 86, and 89 each coordinate Zn(2+). Aspartate 462, aspartate 464, and aspartate 466 together coordinate Mg(2+). Zn(2+) contacts are provided by cysteine 811, cysteine 885, cysteine 892, and cysteine 895.

This sequence belongs to the RNA polymerase beta' chain family. As to quaternary structure, the RNAP catalytic core consists of 2 alpha, 1 beta, 1 beta' and 1 omega subunit. When a sigma factor is associated with the core the holoenzyme is formed, which can initiate transcription. Mg(2+) serves as cofactor. It depends on Zn(2+) as a cofactor.

The catalysed reaction is RNA(n) + a ribonucleoside 5'-triphosphate = RNA(n+1) + diphosphate. Its function is as follows. DNA-dependent RNA polymerase catalyzes the transcription of DNA into RNA using the four ribonucleoside triphosphates as substrates. This Rhizobium etli (strain ATCC 51251 / DSM 11541 / JCM 21823 / NBRC 15573 / CFN 42) protein is DNA-directed RNA polymerase subunit beta'.